The following is a 67-amino-acid chain: Large ribosomal subunit protein bL35 (67 aa).

It belongs to the bacterial ribosomal protein bL35 family.

In Brachyspira hyodysenteriae (strain ATCC 49526 / WA1), this protein is Large ribosomal subunit protein bL35.